The primary structure comprises 114 residues: Notch-regulated ankyrin repeat-containing protein (114 aa).

2 ANK repeats span residues 50–79 (EGQTALHQSVIDGNLELVKLLVKFGADIRL) and 83–112 (DGWSALHIAAYGGHQDIVLYLITKAKYSSS).

It belongs to the NRARP family. In terms of assembly, forms a ternary complex with the intracellular domain (ICD) of notch1 and rbpj/suh.

Its function is as follows. Promotes loss of intracellular domain (ICD) of Notch1 in embryos. By down-regulating ICD levels, could function as a negative feedback regulator of Notch signaling that attenuates ICD-mediated transcription. Involved in angiogenesis. May be involved in somitogenesis. This is Notch-regulated ankyrin repeat-containing protein (nrarp) from Xenopus tropicalis (Western clawed frog).